The primary structure comprises 64 residues: Movement protein TGBp3 (64 aa).

Residues 1–4 (MRSV) lie on the Lumenal side of the membrane. Residues 5–27 (ALTLCAIIAGYLLVSNLQNVFSP) form a helical membrane-spanning segment. Over 28–64 (EVCTLVITGESIRINGCNLSPAHFRAISHLKVLQIHL) the chain is Cytoplasmic.

It belongs to the Tymovirales TGBp3 protein family.

It is found in the host endoplasmic reticulum membrane. In terms of biological role, plays a role in viral cell-to-cell propagation, by facilitating genome transport to neighboring plant cells through plasmosdesmata. May induce the formation of granular vesicles derived from the Endoplasmic reticulum, which align on actin filaments. The chain is Movement protein TGBp3 from Lily symptomless virus (LSV).